The sequence spans 263 residues: 3-methyl-2-oxobutanoate hydroxymethyltransferase (263 aa).

Mg(2+)-binding residues include Asp45 and Asp84. 3-methyl-2-oxobutanoate contacts are provided by residues 45 to 46, Asp84, and Lys113; that span reads DS. Glu115 contributes to the Mg(2+) binding site. Glu182 functions as the Proton acceptor in the catalytic mechanism.

This sequence belongs to the PanB family. Homodecamer; pentamer of dimers. Mg(2+) serves as cofactor.

The protein resides in the cytoplasm. It catalyses the reaction 3-methyl-2-oxobutanoate + (6R)-5,10-methylene-5,6,7,8-tetrahydrofolate + H2O = 2-dehydropantoate + (6S)-5,6,7,8-tetrahydrofolate. It participates in cofactor biosynthesis; coenzyme A biosynthesis. Its function is as follows. Catalyzes the reversible reaction in which hydroxymethyl group from 5,10-methylenetetrahydrofolate is transferred onto alpha-ketoisovalerate to form ketopantoate. In Ignicoccus hospitalis (strain KIN4/I / DSM 18386 / JCM 14125), this protein is 3-methyl-2-oxobutanoate hydroxymethyltransferase.